The chain runs to 534 residues: GMP synthase [glutamine-hydrolyzing] (534 aa).

Residues 4 to 202 enclose the Glutamine amidotransferase type-1 domain; the sequence is KILILDFGSQ…VLEIAKAQPD (199 aa). Residue cysteine 81 is the Nucleophile of the active site. Residues histidine 176 and glutamate 178 contribute to the active site. Positions 203–402 constitute a GMPS ATP-PPase domain; the sequence is WVMKDHVAEA…LGLPHDMVYR (200 aa). 230 to 236 is a binding site for ATP; the sequence is SGGVDSS.

In terms of assembly, homodimer.

The catalysed reaction is XMP + L-glutamine + ATP + H2O = GMP + L-glutamate + AMP + diphosphate + 2 H(+). The protein operates within purine metabolism; GMP biosynthesis; GMP from XMP (L-Gln route): step 1/1. In terms of biological role, catalyzes the synthesis of GMP from XMP. This Methylibium petroleiphilum (strain ATCC BAA-1232 / LMG 22953 / PM1) protein is GMP synthase [glutamine-hydrolyzing].